The chain runs to 617 residues: V-type proton ATPase catalytic subunit A (617 aa).

257-264 (GAFGCGKT) contributes to the ATP binding site.

The protein belongs to the ATPase alpha/beta chains family. As to quaternary structure, V-ATPase is a heteromultimeric enzyme composed of a peripheral catalytic V1 complex (components A to H) attached to an integral membrane V0 proton pore complex (components: a, c, c', c'', d, e, f and VOA1).

The protein resides in the vacuole membrane. It catalyses the reaction ATP + H2O + 4 H(+)(in) = ADP + phosphate + 5 H(+)(out). Catalytic subunit of the V1 complex of vacuolar(H+)-ATPase (V-ATPase), a multisubunit enzyme composed of a peripheral complex (V1) that hydrolyzes ATP and a membrane integral complex (V0) that translocates protons. V-ATPase is responsible for acidifying and maintaining the pH of intracellular compartments. The protein is V-type proton ATPase catalytic subunit A (VMA1) of Eremothecium gossypii (strain ATCC 10895 / CBS 109.51 / FGSC 9923 / NRRL Y-1056) (Yeast).